Consider the following 719-residue polypeptide: Polyphosphate kinase (719 aa).

Residue asparagine 54 participates in ATP binding. Mg(2+)-binding residues include arginine 379 and arginine 409. Residues 434-468 (THLKTHSKIALVVKRMNNKLTSFIHLGTGNYNDKT) form the PLD phosphodiesterase domain. Histidine 439 acts as the Phosphohistidine intermediate in catalysis. ATP contacts are provided by tyrosine 472, arginine 568, and histidine 596.

This sequence belongs to the polyphosphate kinase 1 (PPK1) family. It depends on Mg(2+) as a cofactor. An intermediate of this reaction is the autophosphorylated ppk in which a phosphate is covalently linked to a histidine residue through a N-P bond.

It carries out the reaction [phosphate](n) + ATP = [phosphate](n+1) + ADP. Functionally, catalyzes the reversible transfer of the terminal phosphate of ATP to form a long-chain polyphosphate (polyP). This chain is Polyphosphate kinase, found in Staphylococcus saprophyticus subsp. saprophyticus (strain ATCC 15305 / DSM 20229 / NCIMB 8711 / NCTC 7292 / S-41).